An 85-amino-acid chain; its full sequence is uncharacterized protein (85 aa).

A disordered region spans residues 1–85 (MRWRPSSWSA…DQEQCGQHCR (85 aa)). Residues 47-61 (ASVEGEGGRHADRHG) are compositionally biased toward basic and acidic residues.

This is an uncharacterized protein from Streptomyces lividans.